Here is a 430-residue protein sequence, read N- to C-terminus: Zinc finger CCCH domain-containing protein 48 (430 aa).

Disordered regions lie at residues 1-27 (MDLDMNGGNKRVFQRLGGGSNRPTTDS) and 56-90 (GSGPVAASSNKRVADESGFAGPSHRRGPGFSGTAN). The segment at 26-52 (DSNQKVCFHWRAGRCNRYPCPYLHREL) adopts a C3H1-type 1 zinc-finger fold. The C3H1-type 2 zinc finger occupies 102-129 (TKTEKLCKFWVDGNCPYGDKCRYLHCWS). WD repeat units lie at residues 142–183 (GHQK…GVLN), 221–258 (GPVGQVYSLVVGTDLLFAGTQDGSILVWRYNSTTSCFD), 265–304 (GHTLAVVSLYVGANRLYSGAMDNSIKVWSLDNLQCIQTLT), 306–342 (HTSVVMSLICWDQFLLSCSLDNTVKIWAATEGGNLEV), 345–389 (THKE…ERGK), and 391–429 (LAKQEIRSIQIGPGGIFFTGDGSGQVKVWKWSTESTPIL).

The chain is Zinc finger CCCH domain-containing protein 48 (ZFWD1) from Arabidopsis thaliana (Mouse-ear cress).